The sequence spans 35 residues: UPF0387 membrane protein YohO (35 aa).

Residues 6–26 (IGVIALFLFMALGGIGGVMLA) traverse the membrane as a helical segment.

It belongs to the UPF0387 family.

It is found in the cell inner membrane. This chain is UPF0387 membrane protein YohO, found in Shigella boydii serotype 4 (strain Sb227).